The sequence spans 290 residues: Transcription factor HES-1 (290 aa).

Residues 1–47 form a disordered region; that stretch reads MPADTGMEKPTASPIAGAPASASHTPDKPRSASEHRKSSKPIMEKRR. The span at 10–23 shows a compositional bias: low complexity; the sequence is PTASPIAGAPASAS. The span at 25-36 shows a compositional bias: basic and acidic residues; it reads TPDKPRSASEHR. The 58-residue stretch at 35-92 folds into the bHLH domain; that stretch reads HRKSSKPIMEKRRRARINESLGQLKMLILDALKKDSSRHSKLEKADILEMTVKHLRNL. The Orange domain occupies 111–144; the sequence is YRAGFNECMNEVTRFLSTCEGVNADVRARLLGHL. Residues 287 to 290 carry the WRPW motif motif; it reads WRPW.

As to quaternary structure, transcription repression requires formation of a complex with a corepressor protein of the Groucho/TLE family.

The protein resides in the nucleus. In terms of biological role, transcriptional repressor of genes that require a bHLH protein for their transcription. May act as a negative regulator of myogenesis by inhibiting the functions of MYOD1 and ASH1. This Gallus gallus (Chicken) protein is Transcription factor HES-1 (HES1).